The following is a 127-amino-acid chain: Fluoride-specific ion channel FluC (127 aa).

A run of 4 helical transmembrane segments spans residues 4–24 (PILA…GLGL), 36–56 (GTLV…AFFA), 68–88 (LVIT…AEIV), and 98–118 (WAMS…LAGI). Gly75 and Ser78 together coordinate Na(+).

This sequence belongs to the fluoride channel Fluc/FEX (TC 1.A.43) family.

The protein localises to the cell inner membrane. The enzyme catalyses fluoride(in) = fluoride(out). With respect to regulation, na(+) is not transported, but it plays an essential structural role and its presence is essential for fluoride channel function. Fluoride-specific ion channel. Important for reducing fluoride concentration in the cell, thus reducing its toxicity. This is Fluoride-specific ion channel FluC from Nitrosomonas europaea (strain ATCC 19718 / CIP 103999 / KCTC 2705 / NBRC 14298).